Reading from the N-terminus, the 161-residue chain is Spermidine N(1)-acetyltransferase (161 aa).

The 158-residue stretch at I3–E160 folds into the N-acetyltransferase domain. Acetyl-CoA is bound by residues L92 to L94, T99 to G104, N131, and S136. The active-site Proton donor is Y138. K140 serves as a coordination point for acetyl-CoA.

Belongs to the acetyltransferase family. In terms of assembly, monomer or homodimer.

The catalysed reaction is an alkane-alpha,omega-diamine + acetyl-CoA = an N-acetylalkane-alpha,omega-diamine + CoA + H(+). Its function is as follows. Involved in the protection against polyamine toxicity by regulating their concentration. Could also be involved in the negative control of sporulation as well as production of degradative enzymes such as alpha-amylase, levansucrase and alkaline phosphatase. Catalyzes the transfer of an acetyl group from acetyl coenzyme A (AcCoA) to an acceptor substrate and release both CoA and the acetylated product. It can use a variety of substrates including spermidine, L-tryptophan, L-leucine, L-lysine, dopamine and tyramine. In Thermoplasma acidophilum (strain ATCC 25905 / DSM 1728 / JCM 9062 / NBRC 15155 / AMRC-C165), this protein is Spermidine N(1)-acetyltransferase.